The sequence spans 499 residues: Lysine--tRNA ligase (499 aa).

Mg(2+) contacts are provided by E408 and E415.

This sequence belongs to the class-II aminoacyl-tRNA synthetase family. In terms of assembly, homodimer. Mg(2+) serves as cofactor.

The protein localises to the cytoplasm. It carries out the reaction tRNA(Lys) + L-lysine + ATP = L-lysyl-tRNA(Lys) + AMP + diphosphate. The chain is Lysine--tRNA ligase from Agrobacterium fabrum (strain C58 / ATCC 33970) (Agrobacterium tumefaciens (strain C58)).